A 196-amino-acid chain; its full sequence is Ribonuclease HII (196 aa).

The 193-residue stretch at 4-196 folds into the RNase H type-2 domain; it reads IWVCGVDEAG…PVRRVLEGSF (193 aa). Residues Asp-10, Glu-11, and Asp-106 each coordinate a divalent metal cation.

This sequence belongs to the RNase HII family. It depends on Mn(2+) as a cofactor. The cofactor is Mg(2+).

The protein resides in the cytoplasm. It catalyses the reaction Endonucleolytic cleavage to 5'-phosphomonoester.. In terms of biological role, endonuclease that specifically degrades the RNA of RNA-DNA hybrids. In Polynucleobacter asymbioticus (strain DSM 18221 / CIP 109841 / QLW-P1DMWA-1) (Polynucleobacter necessarius subsp. asymbioticus), this protein is Ribonuclease HII.